The sequence spans 561 residues: Mercuric reductase (561 aa).

Residues 2–65 (THLKITGMTC…AVAGLGYKAT (64 aa)) form the HMA domain. Positions 11 and 14 each coordinate a metal cation. Residues A110, G130, and T135 each coordinate FAD. An intrachain disulfide couples C136 to C141. 4 residues coordinate FAD: K145, A211, D403, and V411. The Hg(2+) site is built by C558 and C559.

The protein belongs to the class-I pyridine nucleotide-disulfide oxidoreductase family. As to quaternary structure, homodimer. FAD is required as a cofactor.

The enzyme catalyses Hg + NADP(+) + H(+) = Hg(2+) + NADPH. Functionally, resistance to Hg(2+) in bacteria appears to be governed by a specialized system which includes mercuric reductase. MerA protein is responsible for volatilizing mercury as Hg(0). Plays a pivotal role in mercury resistance under thiol-depleted conditions and cell protection. Protects cells under thiol-depleted conditions. This chain is Mercuric reductase (merA), found in Pseudomonas aeruginosa.